Reading from the N-terminus, the 89-residue chain is Protein FAM25A (89 aa).

It belongs to the FAM25 family.

In Homo sapiens (Human), this protein is Protein FAM25A.